Consider the following 259-residue polypeptide: DNA adenine methylase (259 aa).

Tyrosine 7, lysine 11, aspartate 50, and aspartate 171 together coordinate S-adenosyl-L-methionine.

Belongs to the N(4)/N(6)-methyltransferase family. Monomer.

The catalysed reaction is a 2'-deoxyadenosine in DNA + S-adenosyl-L-methionine = an N(6)-methyl-2'-deoxyadenosine in DNA + S-adenosyl-L-homocysteine + H(+). In terms of biological role, an alpha subtpe methyltransferase that recognizes the double-stranded sequence 5'-GATC-3' and methylates A-2 on both strands. May prevent degradation of viral DNA by the host restriction-modification antiviral defense system. The polypeptide is DNA adenine methylase (Enterobacteria phage T2 (Bacteriophage T2)).